The chain runs to 146 residues: Catabolic 3-dehydroquinase (146 aa).

Catalysis depends on Tyr24, which acts as the Proton acceptor. Substrate-binding residues include Asn78, His84, and Asp91. Catalysis depends on His104, which acts as the Proton donor. Residues 105–106 and Arg115 contribute to the substrate site; that span reads IT.

Belongs to the type-II 3-dehydroquinase family. As to quaternary structure, homododecamer. Adopts a ring-like structure, composed of an arrangement of two hexameric rings stacked on top of one another.

It carries out the reaction 3-dehydroquinate = 3-dehydroshikimate + H2O. It participates in aromatic compound metabolism; 3,4-dihydroxybenzoate biosynthesis; 3,4-dihydroxybenzoate from 3-dehydroquinate: step 1/2. In terms of biological role, is involved in the catabolism of quinate. Allows the utilization of quinate as carbon source via the beta-ketoadipate pathway. This Candida tropicalis (strain ATCC MYA-3404 / T1) (Yeast) protein is Catabolic 3-dehydroquinase.